A 115-amino-acid polypeptide reads, in one-letter code: MARVKRGNVARKRRNKILRLARGFRGSNGTLFRTANQRVMKALCNAYRDRRRRKRDFRRLWIARINAAARMNGVSYSRLIGGLKKADVRINRKMLAQMAVVDPASFANVVNATQG.

Belongs to the bacterial ribosomal protein bL20 family.

Binds directly to 23S ribosomal RNA and is necessary for the in vitro assembly process of the 50S ribosomal subunit. It is not involved in the protein synthesizing functions of that subunit. The protein is Large ribosomal subunit protein bL20 of Synechococcus sp. (strain CC9311).